The sequence spans 186 residues: Pyridoxal 5'-phosphate synthase subunit PdxT (186 aa).

46–48 (GES) is an L-glutamine binding site. Cys75 functions as the Nucleophile in the catalytic mechanism. Residues Arg101 and 128–129 (IR) each bind L-glutamine. Catalysis depends on charge relay system residues His165 and Glu167.

This sequence belongs to the glutaminase PdxT/SNO family. In the presence of PdxS, forms a dodecamer of heterodimers. Only shows activity in the heterodimer.

The catalysed reaction is aldehydo-D-ribose 5-phosphate + D-glyceraldehyde 3-phosphate + L-glutamine = pyridoxal 5'-phosphate + L-glutamate + phosphate + 3 H2O + H(+). It catalyses the reaction L-glutamine + H2O = L-glutamate + NH4(+). It participates in cofactor biosynthesis; pyridoxal 5'-phosphate biosynthesis. Functionally, catalyzes the hydrolysis of glutamine to glutamate and ammonia as part of the biosynthesis of pyridoxal 5'-phosphate. The resulting ammonia molecule is channeled to the active site of PdxS. In Methanocaldococcus jannaschii (strain ATCC 43067 / DSM 2661 / JAL-1 / JCM 10045 / NBRC 100440) (Methanococcus jannaschii), this protein is Pyridoxal 5'-phosphate synthase subunit PdxT.